A 267-amino-acid chain; its full sequence is 5'-nucleotidase SurE (267 aa).

Asp-9, Asp-10, Ser-41, and Asn-95 together coordinate a divalent metal cation.

It belongs to the SurE nucleotidase family. A divalent metal cation serves as cofactor.

The protein localises to the cytoplasm. It catalyses the reaction a ribonucleoside 5'-phosphate + H2O = a ribonucleoside + phosphate. Functionally, nucleotidase that shows phosphatase activity on nucleoside 5'-monophosphates. The sequence is that of 5'-nucleotidase SurE from Aeropyrum pernix (strain ATCC 700893 / DSM 11879 / JCM 9820 / NBRC 100138 / K1).